The sequence spans 440 residues: Deoxyguanosinetriphosphate triphosphohydrolase-like protein (440 aa).

An HD domain is found at 61–256; the sequence is RLIHSLEVSC…MEAADDLCYS (196 aa).

This sequence belongs to the dGTPase family. Type 3 subfamily.

This chain is Deoxyguanosinetriphosphate triphosphohydrolase-like protein, found in Synechocystis sp. (strain ATCC 27184 / PCC 6803 / Kazusa).